A 730-amino-acid chain; its full sequence is MSTEYPLVGSPETSEYPKYECSLCLKRYKRREHLFRHIGSHTSQRPYQCNSCDGAFQRADVLKRHLRTCDGGASRASTRRRACDRCVRQKKACSSHQPCHSCAKKGAQCLYSTDTGYSSRLSQHSSTNHTPKDQELSTQFTNPPPPPSTSTFNTMMPWGLTMEDLQNFGTSPTNTFFDPASMQYTSPTLPDFSVLPFEGPATFETPVSSDPPRKSLHFLDKFTSNTGLVSSFDCGTHEQREQIAARLDQQILSELQQRIMSMPALGMDIPSPLIMENNSDTSSTSDLPLDWFNDPLSLKTHEILLLVEEVVTIKPRNSSVALDWSSTLRDACLQFFSPSNIRRFLGFYWAIWHPNVNFVHRPTFDMLAAKPTLLAAMALIGACVSPDMPDNEDARTWFNCVEEMVFIDDDFNSDLTYQYSGNIAIQRRKIQAVQAAYIVCLYQNWEGADASKSRIRRYRFATLVSTARDIGITAARHLNYSELGRHEFEWKEYEAREELIRLFTWIFLLDSAFVIFNNLPPRMVIKEIRMHMATPEACFQATTADECHHQLHLFLPARTLYWTTSFRGSFESLCKDDLSVNIRHLLATLGPLNLFALTSAIHSQIFQFRSAVGSFQLRAPIQNALSNWRDIWQLFSSTFPQGITPHMTIEDPHIQPEELWKRMGFFRYAPEYWLLAHLMADRLAVLGTSKPENELEPLDEGPLDPILNRYDQTSMRQVNDLIMGFQTFQI.

The C2H2-type 1 zinc finger occupies 19–41 (YECSLCLKRYKRREHLFRHIGSH). The C2H2-type 2; atypical zinc finger occupies 47–69 (YQCNSCDGAFQRADVLKRHLRTC). Positions 83–109 (CDRCVRQKKACSSHQPCHSCAKKGAQC) form a DNA-binding region, zn(2)-C6 fungal-type. Over residues 120–129 (RLSQHSSTNH) the composition is skewed to polar residues. The disordered stretch occupies residues 120–151 (RLSQHSSTNHTPKDQELSTQFTNPPPPPSTST).

The protein resides in the nucleus. Its function is as follows. Transcription factor; part of the gene cluster that mediates the biosynthesis of the neurotoxin verrucosidin, a methylated alpha-pyrone polyketide that inhibits oxidative phosphorylation in mitochondria and thereby causes neurological diseases. This Penicillium polonicum protein is Transcription factor verF.